The following is a 929-amino-acid chain: Thrombospondin-3b (929 aa).

The first 22 residues, 1–22 (MELRKIVPNLLVLYVAVHFSQS), serve as a signal peptide directing secretion. In terms of domain architecture, Laminin G-like spans 24-192 (EIKVINVLEL…VESVKLALGG (169 aa)). Asparagine 45 carries N-linked (GlcNAc...) asparagine glycosylation. 18 disulfides stabilise this stretch: cysteine 277-cysteine 288, cysteine 282-cysteine 299, cysteine 319-cysteine 343, cysteine 349-cysteine 362, cysteine 356-cysteine 371, cysteine 374-cysteine 386, cysteine 392-cysteine 406, cysteine 400-cysteine 416, cysteine 418-cysteine 429, cysteine 445-cysteine 452, cysteine 457-cysteine 477, cysteine 493-cysteine 513, cysteine 516-cysteine 536, cysteine 552-cysteine 572, cysteine 575-cysteine 595, cysteine 613-cysteine 633, cysteine 653-cysteine 673, and cysteine 689-cysteine 910. Residues 345–384 (DIDECAELSGSCVPNSVCINTVGSFKCGQCKAGFVGNQTV) enclose the EGF-like 1; calcium-binding domain. Asparagine 381 carries an N-linked (GlcNAc...) asparagine glycan. One can recognise an EGF-like 2 domain in the interval 388-430 (ARRTCETLGYSPCDVNSHCVMGRNSDVSCVCNVGWAGNGNICG). TSP type-3 repeat units follow at residues 431 to 465 (PDSD…NSGQ), 466 to 501 (EDTD…NKDQ), 502 to 524 (QNSD…NGDQ), 525 to 560 (LDTD…NPMQ), 561 to 583 (TDRD…DPLQ), 584 to 621 (SDMD…NSSQ), 622 to 661 (LDSD…NPSQ), and 662 to 697 (IDTD…EVTM). Basic and acidic residues predominate over residues 602–613 (DGDGYQDTRDNC). The tract at residues 602–651 (DGDGYQDTRDNCPEVPNSSQLDSDNDGIGDECDDDDDNDGIPDILPPGPD) is disordered. N-linked (GlcNAc...) asparagine glycosylation occurs at asparagine 618. The segment covering 624–641 (SDNDGIGDECDDDDDNDG) has biased composition (acidic residues). Positions 701–915 (RAFQTVILDP…LGYRCNDSIP (215 aa)) constitute a TSP C-terminal domain. The N-linked (GlcNAc...) asparagine glycan is linked to asparagine 911.

This sequence belongs to the thrombospondin family. Oligomer; disulfide-linked.

In terms of biological role, adhesive glycoprotein that mediates cell-to-cell and cell-to-matrix interactions. Can bind to fibrinogen, fibronectin, laminin and type V collagen. The polypeptide is Thrombospondin-3b (Danio rerio (Zebrafish)).